Here is a 132-residue protein sequence, read N- to C-terminus: S-adenosylmethionine decarboxylase proenzyme (132 aa).

Catalysis depends on S65, which acts as the Schiff-base intermediate with substrate; via pyruvic acid. At S65 the chain carries Pyruvic acid (Ser); by autocatalysis. H70 (proton acceptor; for processing activity) is an active-site residue. C85 functions as the Proton donor; for catalytic activity in the catalytic mechanism.

Belongs to the prokaryotic AdoMetDC family. Type 1 subfamily. As to quaternary structure, heterotetramer of two alpha and two beta chains arranged as a dimer of alpha/beta heterodimers. It depends on pyruvate as a cofactor. Is synthesized initially as an inactive proenzyme. Formation of the active enzyme involves a self-maturation process in which the active site pyruvoyl group is generated from an internal serine residue via an autocatalytic post-translational modification. Two non-identical subunits are generated from the proenzyme in this reaction, and the pyruvate is formed at the N-terminus of the alpha chain, which is derived from the carboxyl end of the proenzyme. The post-translation cleavage follows an unusual pathway, termed non-hydrolytic serinolysis, in which the side chain hydroxyl group of the serine supplies its oxygen atom to form the C-terminus of the beta chain, while the remainder of the serine residue undergoes an oxidative deamination to produce ammonia and the pyruvoyl group blocking the N-terminus of the alpha chain.

It carries out the reaction S-adenosyl-L-methionine + H(+) = S-adenosyl 3-(methylsulfanyl)propylamine + CO2. It participates in amine and polyamine biosynthesis; S-adenosylmethioninamine biosynthesis; S-adenosylmethioninamine from S-adenosyl-L-methionine: step 1/1. Its function is as follows. Catalyzes the decarboxylation of S-adenosylmethionine to S-adenosylmethioninamine (dcAdoMet), the propylamine donor required for the synthesis of the polyamines spermine and spermidine from the diamine putrescine. This chain is S-adenosylmethionine decarboxylase proenzyme, found in Symbiobacterium thermophilum (strain DSM 24528 / JCM 14929 / IAM 14863 / T).